The primary structure comprises 180 residues: Large ribosomal subunit protein uL5 (180 aa).

Belongs to the universal ribosomal protein uL5 family. As to quaternary structure, part of the 50S ribosomal subunit; part of the 5S rRNA/L5/L18/L25 subcomplex. Contacts the 5S rRNA and the P site tRNA. Forms a bridge to the 30S subunit in the 70S ribosome.

This is one of the proteins that bind and probably mediate the attachment of the 5S RNA into the large ribosomal subunit, where it forms part of the central protuberance. In the 70S ribosome it contacts protein S13 of the 30S subunit (bridge B1b), connecting the 2 subunits; this bridge is implicated in subunit movement. Contacts the P site tRNA; the 5S rRNA and some of its associated proteins might help stabilize positioning of ribosome-bound tRNAs. The polypeptide is Large ribosomal subunit protein uL5 (Roseiflexus castenholzii (strain DSM 13941 / HLO8)).